The chain runs to 328 residues: Complex I intermediate-associated protein 30, mitochondrial (328 aa).

The N-terminal 24 residues, 1–24 (MSSIHKLLTGIYIHKNFLRPRAAL), are a transit peptide targeting the mitochondrion. A compositionally biased stretch (polar residues) spans 44-54 (VTSVDRASQQG). Positions 44 to 80 (VTSVDRASQQGKTEEGLQGHDHKEVALDAPSPDRTPE) are disordered. A compositionally biased stretch (basic and acidic residues) spans 55–69 (KTEEGLQGHDHKEVA). The residue at position 319 (Ser319) is a Phosphoserine.

The protein belongs to the CIA30 family. As to quaternary structure, part of the mitochondrial complex I assembly/MCIA complex that comprises at least the core subunits TMEM126B, NDUFAF1, ECSIT and ACAD9 and complement subunits such as COA1 and TMEM186. Interacts with ECSIT. Interacts with ACAD9. At early stages of complex I assembly, it is found in intermediate subcomplexes that contain different subunits including NDUFB6, NDUFA6, NDUFA9, NDUFS3, NDUFS7, ND1, ND2 and ND3. Interacts with TMEM70 and TMEM242.

The protein localises to the mitochondrion. The protein resides in the mitochondrion matrix. Its function is as follows. As part of the MCIA complex, involved in the assembly of the mitochondrial complex I. This is Complex I intermediate-associated protein 30, mitochondrial from Mus musculus (Mouse).